Consider the following 478-residue polypeptide: Kynureninase (478 aa).

Pyridoxal 5'-phosphate is bound by residues Leu150, Thr151, 178–181 (FPSD), Ser234, Asp263, His266, and Tyr288. Lys289 carries the N6-(pyridoxal phosphate)lysine modification. The pyridoxal 5'-phosphate site is built by Trp318 and Asn346.

The protein belongs to the kynureninase family. In terms of assembly, homodimer. It depends on pyridoxal 5'-phosphate as a cofactor.

The protein localises to the cytoplasm. It carries out the reaction L-kynurenine + H2O = anthranilate + L-alanine + H(+). The enzyme catalyses 3-hydroxy-L-kynurenine + H2O = 3-hydroxyanthranilate + L-alanine + H(+). It functions in the pathway amino-acid degradation; L-kynurenine degradation; L-alanine and anthranilate from L-kynurenine: step 1/1. The protein operates within cofactor biosynthesis; NAD(+) biosynthesis; quinolinate from L-kynurenine: step 2/3. Catalyzes the cleavage of L-kynurenine (L-Kyn) and L-3-hydroxykynurenine (L-3OHKyn) into anthranilic acid (AA) and 3-hydroxyanthranilic acid (3-OHAA), respectively. This Caenorhabditis elegans protein is Kynureninase.